A 270-amino-acid chain; its full sequence is tRNA pseudouridine synthase A (270 aa).

Asp51 serves as the catalytic Nucleophile. Tyr109 is a binding site for substrate.

It belongs to the tRNA pseudouridine synthase TruA family. As to quaternary structure, homodimer.

It carries out the reaction uridine(38/39/40) in tRNA = pseudouridine(38/39/40) in tRNA. Its function is as follows. Formation of pseudouridine at positions 38, 39 and 40 in the anticodon stem and loop of transfer RNAs. The polypeptide is tRNA pseudouridine synthase A (Burkholderia orbicola (strain MC0-3)).